A 634-amino-acid chain; its full sequence is Poly(ribitol-phosphate) beta-glucosyltransferase (634 aa).

The protein belongs to the glycosyltransferase 2 family.

The enzyme catalyses 4-O-[(D-ribitylphospho)(n)-D-ribitylphospho-(2R)-glycerylphospho]-N-acetyl-beta-D-mannosaminyl-(1-&gt;4)-N-acetyl-alpha-D-glucosaminyl di-trans,octa-cis-undecaprenyl diphosphate + n UDP-alpha-D-glucose = 4-O-[(2-beta-D-glucosyl-D-ribitylphospho)(n)-D-ribitylphospho-(2R)-glycerylphospho]-N-acetyl-beta-D-mannosaminyl-(1-&gt;4)-N-acetyl-alpha-D-glucosaminyl di-trans,octa-cis-undecaprenyl diphosphate + n UDP + n H(+). The protein operates within cell wall biogenesis; poly(ribitol phosphate) teichoic acid biosynthesis. Attaches glucose residues to poly(RboP)-wall teichoic acids (WTAs). The sequence is that of Poly(ribitol-phosphate) beta-glucosyltransferase from Bacillus spizizenii (strain ATCC 23059 / NRRL B-14472 / W23) (Bacillus subtilis subsp. spizizenii).